Here is a 132-residue protein sequence, read N- to C-terminus: UPF0329 protein ECU07_0050/ECU09_2020 (132 aa).

It belongs to the UPF0329 family.

This chain is UPF0329 protein ECU07_0050/ECU09_2020, found in Encephalitozoon cuniculi (strain GB-M1) (Microsporidian parasite).